The primary structure comprises 945 residues: MSNKKADSKPQAKYPVNLLDTPFPMRGDLPKREPQWVEDWEARGVYEKIRAASQGRPKFILHDGPPYANGDIHLGHAVNKILKDMVVKSRNMAGFDAPYVPGWDCHGMPIEIQIEKRFGKSLPAAEVMAKARAYATEQIEKQKVGFKRLGVLGEWGNPYKTMNFQNEAEEIRALGKIIEKGYVYRGLKPVNWCFDCGSALAEAEVEYKDRTDPTIDVLFAFAEPEKTAHAFGLAELPRAEGGIVIWTTTPWTIPANQALNLHPEIVYALVDTERGLLVMAEERVEACMKDFGLTGRVIARTPGEKLANLRFHHPLAAAHPGYKRTSPVYLGDYVTTDTGTGVVHSSPAYGVEDFTSCKAHGMTDSDIINPVMGDGRYIESLPLFGGLTIWDANPKIVDALKAAGSLLRNERYAHSYMHCWRHKTPIIYRATSQWFAGMDTQPAGGGKTLRETALDAVDATAFYPSWGKQRLHAMIANRPDWTLSRQRQWGVPMAFFVHKETGELHPRTLELLEEVAKRVERQGIEAWQTLDARELIGDDANLYEKNRDTLDVWFDSGTTHWHVLRGSHKDQLQFPADLYLEGSDQHRGWFHSSLLTASMLDGRAPYKGLLTHGFTVDGEGRKMSKSLGNGIDPHEVANRLGAEIIRLWIASTDYSGELAISEEILKRVTEGYRRIRNTLRFLLANLSDFDYAKDALPAGQWLEIDRYAVAFAAQLQAELLAHYEKYEFHPVVAKLQTFCSEDLGGFYLDVLKDRLYTSAPASPARRSAQTALYHVTQGLLRVLAPFLSFTAEEAWRVFQPQSDTIFTETYYAYPEIAGAEALIAKWTLLRDVRGDVTKALEEARTANRIGSSLQAQVEVRASGARYDALASLGDDLKFVLITSAATVVKVDAQGDESVDVAASTYPKCERCWHYREDVGAHADHPTLCGRCFSNLFENGETRSAA.

The short motif at 66–76 is the 'HIGH' region element; sequence PYANGDIHLGH. Residue Glu-581 participates in L-isoleucyl-5'-AMP binding. The 'KMSKS' region motif lies at 622–626; sequence KMSKS. Lys-625 contacts ATP. Zn(2+) is bound by residues Cys-908, Cys-911, Cys-928, and Cys-931.

The protein belongs to the class-I aminoacyl-tRNA synthetase family. IleS type 1 subfamily. Monomer. Zn(2+) is required as a cofactor.

It is found in the cytoplasm. It catalyses the reaction tRNA(Ile) + L-isoleucine + ATP = L-isoleucyl-tRNA(Ile) + AMP + diphosphate. Its function is as follows. Catalyzes the attachment of isoleucine to tRNA(Ile). As IleRS can inadvertently accommodate and process structurally similar amino acids such as valine, to avoid such errors it has two additional distinct tRNA(Ile)-dependent editing activities. One activity is designated as 'pretransfer' editing and involves the hydrolysis of activated Val-AMP. The other activity is designated 'posttransfer' editing and involves deacylation of mischarged Val-tRNA(Ile). The protein is Isoleucine--tRNA ligase 1 of Burkholderia mallei (strain ATCC 23344).